Consider the following 481-residue polypeptide: Phosphoglucosamine mutase (481 aa).

Serine 128 (phosphoserine intermediate) is an active-site residue. Mg(2+) is bound by residues serine 128, aspartate 269, aspartate 271, and aspartate 273. A Phosphoserine modification is found at serine 128.

It belongs to the phosphohexose mutase family. The cofactor is Mg(2+). Activated by phosphorylation.

The catalysed reaction is alpha-D-glucosamine 1-phosphate = D-glucosamine 6-phosphate. Functionally, catalyzes the conversion of glucosamine-6-phosphate to glucosamine-1-phosphate. This Synechocystis sp. (strain ATCC 27184 / PCC 6803 / Kazusa) protein is Phosphoglucosamine mutase.